Here is a 670-residue protein sequence, read N- to C-terminus: Leucine-rich repeat-containing protein 45 (670 aa).

6 LRR repeats span residues 58 to 80, 87 to 107, 115 to 136, 145 to 166, 173 to 194, and 201 to 212; these read TLCT…LLLR, VLRF…EALG, SIQS…FATF, ALQR…ELAL, TLQQ…ALMN, and TLWRLDLAGNNI. Residues 252 to 645 are a coiled coil; the sequence is REEKSKQFLD…IARIRDEEAQ (394 aa). The residue at position 661 (Ser661) is a Phosphoserine; by NEK2.

As to quaternary structure, homomer. Interacts with CROCC/rootletin and CEP250. Interacts with CEP44. Interacts with CCDC102B (via N-terminus). Post-translationally, phosphorylated by NEK2 during misosis, phosphorylation reduces centrosomal localization which subsequently leads to centrosome separation.

Its subcellular location is the cytoplasm. The protein resides in the cytoskeleton. It localises to the microtubule organizing center. The protein localises to the centrosome. Its function is as follows. Component of the proteinaceous fiber-like linker between two centrioles, required for centrosome cohesion. The polypeptide is Leucine-rich repeat-containing protein 45 (LRRC45) (Homo sapiens (Human)).